Here is a 777-residue protein sequence, read N- to C-terminus: CRISPR system single-strand-specific deoxyribonuclease Cas10/Csm1 (subtype III-A) (777 aa).

In terms of domain architecture, HD spans 1–106 (MEIDELTALG…VYEADNLASG (106 aa)). The 148-residue stretch at 513 to 660 (RRLGVMKGDV…GRNRVFVVGR (148 aa)) folds into the GGDEF domain.

Belongs to the CRISPR-associated Cas10/Csm1 family. In terms of assembly, probably part of the Csm effector complex, that includes Cas10, Csm2, Csm3, Csm4, Csm5 and mature crRNA. Will form a homodimer in solution, interacts with Csm4, which is a tighter, better association than the homodimeric Cas10 and uses the same interface for interaction. A divalent metal cation is required as a cofactor.

SsDNase activity is inhibited by EDTA. CRISPR (clustered regularly interspaced short palindromic repeat) is an adaptive immune system that provides protection against mobile genetic elements (viruses, transposable elements and conjugative plasmids). CRISPR clusters contain spacers, sequences complementary to antecedent mobile elements, and target invading nucleic acids. CRISPR clusters are transcribed and processed into CRISPR RNA (crRNA). The type III-A Csm effector complex binds crRNA and acts as a crRNA-guided RNase, DNase and cyclic oligoadenylate synthase; binding of target RNA cognate to the crRNA is required for all activities. Functionally, a single-strand deoxyribonuclease (ssDNase) which digests linear and circular ssDNA; has 5'-3' and 3'-5' exonuclease activity as well as a less efficient endonuclease activity. Has a minimal size requirement; 100 nucleotide ssDNA (nt) is more efficiently digested than 50 or 25 nt ssDNA, while 14 nt ssDNA is not cleaved at all. It has no activity on dsDNA or ssRNA. Its function is as follows. ssDNase activity is stimulated in the ternary Csm effector complex; binding of cognate target RNA activates the ssDNase, as the target RNA is degraded ssDNA activity decreases. In terms of biological role, when associated with the ternary Csm effector complex (the crRNA, Cas proteins and a cognate target ssRNA) synthesizes cyclic oligoadenylates (cOA) from ATP. cOAs are second messengers that stimulate the ssRNase activity of Csm6, inducing an antiviral state important for defense against invading nucleic acids. The polypeptide is CRISPR system single-strand-specific deoxyribonuclease Cas10/Csm1 (subtype III-A) (Thermococcus onnurineus (strain NA1)).